The chain runs to 636 residues: 1-deoxy-D-xylulose-5-phosphate synthase (636 aa).

Thiamine diphosphate contacts are provided by residues histidine 74 and 115-117; that span reads AHS. Aspartate 146 is a binding site for Mg(2+). Residues 147–148, asparagine 176, tyrosine 287, and glutamate 369 each bind thiamine diphosphate; that span reads GS. Asparagine 176 serves as a coordination point for Mg(2+).

Belongs to the transketolase family. DXPS subfamily. In terms of assembly, homodimer. Mg(2+) serves as cofactor. Thiamine diphosphate is required as a cofactor.

The enzyme catalyses D-glyceraldehyde 3-phosphate + pyruvate + H(+) = 1-deoxy-D-xylulose 5-phosphate + CO2. Its pathway is metabolic intermediate biosynthesis; 1-deoxy-D-xylulose 5-phosphate biosynthesis; 1-deoxy-D-xylulose 5-phosphate from D-glyceraldehyde 3-phosphate and pyruvate: step 1/1. Its function is as follows. Catalyzes the acyloin condensation reaction between C atoms 2 and 3 of pyruvate and glyceraldehyde 3-phosphate to yield 1-deoxy-D-xylulose-5-phosphate (DXP). The polypeptide is 1-deoxy-D-xylulose-5-phosphate synthase (Polaromonas naphthalenivorans (strain CJ2)).